A 124-amino-acid chain; its full sequence is MEYEFRRNGLDGSVMARFSMEHEVMGRWFGEELGDKPAATAAVLTAIAAIQAGELREWRLTGREFSLELDEEQARVYANVLGYDNQDELDDGMSLYDAELEASCGLEDLEAALQSWQAFLVETR.

The protein belongs to the UPF0231 family.

This is UPF0231 protein Sama_0645 from Shewanella amazonensis (strain ATCC BAA-1098 / SB2B).